The sequence spans 339 residues: Exonuclease subunit 1 (339 aa).

It to phage T5 protein D12 and to yeast RAD52. Consists of two subunits: gp46 and gp47.

Exonuclease that plays a role in viral genome replication, DNA recombination, and host DNA degradation. The polypeptide is Exonuclease subunit 1 (47) (Escherichia coli (Bacteriophage T4)).